The sequence spans 122 residues: Large ribosomal subunit protein bL12 (122 aa).

The protein belongs to the bacterial ribosomal protein bL12 family. In terms of assembly, homodimer. Part of the ribosomal stalk of the 50S ribosomal subunit. Forms a multimeric L10(L12)X complex, where L10 forms an elongated spine to which 2 to 4 L12 dimers bind in a sequential fashion. Binds GTP-bound translation factors.

In terms of biological role, forms part of the ribosomal stalk which helps the ribosome interact with GTP-bound translation factors. Is thus essential for accurate translation. The sequence is that of Large ribosomal subunit protein bL12 from Pasteurella multocida (strain Pm70).